Here is a 447-residue protein sequence, read N- to C-terminus: Na(+)-translocating NADH-quinone reductase subunit A (447 aa).

Belongs to the NqrA family. As to quaternary structure, composed of six subunits; NqrA, NqrB, NqrC, NqrD, NqrE and NqrF.

It catalyses the reaction a ubiquinone + n Na(+)(in) + NADH + H(+) = a ubiquinol + n Na(+)(out) + NAD(+). NQR complex catalyzes the reduction of ubiquinone-1 to ubiquinol by two successive reactions, coupled with the transport of Na(+) ions from the cytoplasm to the periplasm. NqrA to NqrE are probably involved in the second step, the conversion of ubisemiquinone to ubiquinol. This is Na(+)-translocating NADH-quinone reductase subunit A from Yersinia pestis.